Here is a 432-residue protein sequence, read N- to C-terminus: Tyrosine-protein phosphatase non-receptor type 1 (432 aa).

Position 1 is an N-acetylmethionine (methionine 1). One can recognise a Tyrosine-protein phosphatase domain in the interval 3–277; the sequence is MEKEFEQIDK…RFSYLAVIEG (275 aa). At tyrosine 20 the chain carries Phosphotyrosine. Serine 50 carries the phosphoserine; by PKB/AKT1, CLK1 and CLK2 modification. Tyrosine 66 bears the Phosphotyrosine; by EGFR mark. Substrate contacts are provided by residues aspartate 181 and 215 to 221; that span reads CSAGIGR. Residue cysteine 215 is the Phosphocysteine intermediate of the active site. Cysteine 215 is modified (cysteine persulfide). Residue cysteine 215 is modified to S-nitrosocysteine; in reversibly inhibited form. A phosphoserine; by CLK1 and CLK2 mark is found at serine 242 and serine 243. Glutamine 262 serves as a coordination point for substrate. The segment at 297 to 322 is disordered; that stretch reads EDLEPPPEHVPPPPRPPKRTLEPHNG. Residues serine 335, serine 362, and serine 364 each carry the phosphoserine modification. Residues 350–402 form a disordered region; sequence SRAPSIAVHSMSSMSQDTEVRKRMVGGGLQSAQASVPTEEELSPTEEEQKAHR. Position 367 is a phosphothreonine (threonine 367).

It belongs to the protein-tyrosine phosphatase family. Non-receptor class 1 subfamily. In terms of assembly, interacts with EPHA3 (phosphorylated); dephosphorylates EPHA3 and may regulate its trafficking and function. Interacts with MET. Interacts with NCK1. In terms of processing, ser-50 is the major site of phosphorylation as compared to Ser-242 and Ser-243. Activated by phosphorylation at Ser-50. S-nitrosylation of Cys-215 inactivates the enzyme activity. Post-translationally, sulfhydration at Cys-215 following endoplasmic reticulum stress inactivates the enzyme activity, promoting EIF2AK3/PERK activity. Found in several tissues including central nervous system, liver and kidney. A high level of expression was found in the hippocampus.

Its subcellular location is the endoplasmic reticulum membrane. The enzyme catalyses O-phospho-L-tyrosyl-[protein] + H2O = L-tyrosyl-[protein] + phosphate. Its function is as follows. Tyrosine-protein phosphatase which acts as a regulator of endoplasmic reticulum unfolded protein response. Mediates dephosphorylation of EIF2AK3/PERK; inactivating the protein kinase activity of EIF2AK3/PERK. May play an important role in CKII- and p60c-src-induced signal transduction cascades. May regulate the EFNA5-EPHA3 signaling pathway which modulates cell reorganization and cell-cell repulsion. May also regulate the hepatocyte growth factor receptor signaling pathway through dephosphorylation of MET. The chain is Tyrosine-protein phosphatase non-receptor type 1 (Ptpn1) from Rattus norvegicus (Rat).